Consider the following 213-residue polypeptide: Putative manganese efflux pump MntP (213 aa).

7 consecutive transmembrane segments (helical) span residues 6 to 26 (LGVL…GIGM), 34 to 54 (AFML…FGIL), 58 to 78 (ALGL…LFFL), 107 to 127 (GSGG…LFAP), 132 to 152 (LVVI…SLGT), 153 to 173 (VGAQ…IMTV), and 192 to 212 (LAGG…SASP).

This sequence belongs to the MntP (TC 9.B.29) family.

It localises to the cell membrane. Functionally, probably functions as a manganese efflux pump. The protein is Putative manganese efflux pump MntP of Heliobacterium modesticaldum (strain ATCC 51547 / Ice1).